Consider the following 152-residue polypeptide: Xanthine-guanine phosphoribosyltransferase (152 aa).

5-phospho-alpha-D-ribose 1-diphosphate-binding positions include 37-38, R69, and 88-96; these read RG and DDLVDTGGT. R69 contacts GMP. D89 contributes to the Mg(2+) binding site. Residues D92 and I135 each contribute to the guanine site. Residues D92 and I135 each contribute to the xanthine site. Residues 92–96 and 134–135 contribute to the GMP site; these read DTGGT and WI.

The protein belongs to the purine/pyrimidine phosphoribosyltransferase family. XGPT subfamily. Homotetramer. The cofactor is Mg(2+).

The protein localises to the cell inner membrane. The enzyme catalyses GMP + diphosphate = guanine + 5-phospho-alpha-D-ribose 1-diphosphate. It catalyses the reaction XMP + diphosphate = xanthine + 5-phospho-alpha-D-ribose 1-diphosphate. It carries out the reaction IMP + diphosphate = hypoxanthine + 5-phospho-alpha-D-ribose 1-diphosphate. It functions in the pathway purine metabolism; GMP biosynthesis via salvage pathway; GMP from guanine: step 1/1. It participates in purine metabolism; XMP biosynthesis via salvage pathway; XMP from xanthine: step 1/1. Purine salvage pathway enzyme that catalyzes the transfer of the ribosyl-5-phosphate group from 5-phospho-alpha-D-ribose 1-diphosphate (PRPP) to the N9 position of the 6-oxopurines guanine and xanthine to form the corresponding ribonucleotides GMP (guanosine 5'-monophosphate) and XMP (xanthosine 5'-monophosphate), with the release of PPi. To a lesser extent, also acts on hypoxanthine. The polypeptide is Xanthine-guanine phosphoribosyltransferase (Klebsiella pneumoniae (strain 342)).